Consider the following 971-residue polypeptide: UPF0182 protein RER_22310 (971 aa).

The next 7 membrane-spanning stretches (helical) occupy residues 16 to 36 (ILLV…RLIG), 61 to 81 (FVLF…AMLL), 112 to 132 (LFGV…AQAN), 172 to 192 (WLFV…YVFG), 209 to 229 (VQLA…YWFD), 257 to 277 (AKLI…ASIF), and 286 to 306 (MAVA…PMIV). Residues 890-927 (GSAATVTQPAPDPDTGAQPETPTTPTAPAPPASSDDVT) are disordered.

Belongs to the UPF0182 family.

The protein resides in the cell membrane. The sequence is that of UPF0182 protein RER_22310 from Rhodococcus erythropolis (strain PR4 / NBRC 100887).